The primary structure comprises 490 residues: Scarecrow-like transcription factor PAT1 (490 aa).

Residues 110–490 form the GRAS domain; it reads TLEAISRRDL…RDLVASCAWK (381 aa). Residues 117 to 178 form a leucine repeat I (LRI) region; sequence RDLRADLVSC…AQLASSGSSI (62 aa). The tract at residues 197–262 is VHIID; the sequence is MHILYEVCPY…GGPPRIRITG (66 aa). The short motif at 228–232 is the VHIID element; that stretch reads VHIID. The leucine repeat II (LRII) stretch occupies residues 278 to 310; the sequence is IVGNRLAKLAKQFNVPFEFNSVSVSVSEVKPKN. Residues 319-413 are PFYRE; the sequence is LAVNFAFVLH…QHCLARDVVN (95 aa). An SAW region spans residues 416-490; it reads ACEGADRVER…RDLVASCAWK (75 aa).

This sequence belongs to the GRAS family.

It localises to the cytoplasm. Probable transcription factor involved in phytochrome A (phyA) signal transduction. The chain is Scarecrow-like transcription factor PAT1 (PAT1) from Arabidopsis thaliana (Mouse-ear cress).